We begin with the raw amino-acid sequence, 613 residues long: tRNA 5-methylaminomethyl-2-thiouridine biosynthesis bifunctional protein MnmC (613 aa).

The segment at 1–225 (MKKAKLIFKD…KREMIKAYLE (225 aa)) is tRNA (mnm(5)s(2)U34)-methyltransferase. The FAD-dependent cmnm(5)s(2)U34 oxidoreductase stretch occupies residues 252–613 (IGAGISSAVL…FLIRKLKKGL (362 aa)).

The protein in the N-terminal section; belongs to the methyltransferase superfamily. tRNA (mnm(5)s(2)U34)-methyltransferase family. It in the C-terminal section; belongs to the DAO family. It depends on FAD as a cofactor.

It is found in the cytoplasm. The enzyme catalyses 5-aminomethyl-2-thiouridine(34) in tRNA + S-adenosyl-L-methionine = 5-methylaminomethyl-2-thiouridine(34) in tRNA + S-adenosyl-L-homocysteine + H(+). Functionally, catalyzes the last two steps in the biosynthesis of 5-methylaminomethyl-2-thiouridine (mnm(5)s(2)U) at the wobble position (U34) in tRNA. Catalyzes the FAD-dependent demodification of cmnm(5)s(2)U34 to nm(5)s(2)U34, followed by the transfer of a methyl group from S-adenosyl-L-methionine to nm(5)s(2)U34, to form mnm(5)s(2)U34. In Campylobacter jejuni subsp. jejuni serotype O:6 (strain 81116 / NCTC 11828), this protein is tRNA 5-methylaminomethyl-2-thiouridine biosynthesis bifunctional protein MnmC.